A 917-amino-acid polypeptide reads, in one-letter code: Protein translocase subunit SecA 1 (917 aa).

Residues glutamine 87, 105–109 (GEGKT), and aspartate 507 each bind ATP. A disordered region spans residues 866-917 (EKSPESIGEDIEGREHPQKHQPFVRQGEKIGRNDPCPCGSGKKYKQCHGKLN). The Zn(2+) site is built by cysteine 901, cysteine 903, cysteine 912, and histidine 913. A compositionally biased stretch (basic residues) spans 907 to 917 (KKYKQCHGKLN).

It belongs to the SecA family. Monomer and homodimer. Part of the essential Sec protein translocation apparatus which comprises SecA, SecYEG and auxiliary proteins SecDF-YajC and YidC. Zn(2+) is required as a cofactor.

The protein localises to the cell inner membrane. The protein resides in the cytoplasm. The catalysed reaction is ATP + H2O + cellular proteinSide 1 = ADP + phosphate + cellular proteinSide 2.. Its function is as follows. Part of the Sec protein translocase complex. Interacts with the SecYEG preprotein conducting channel. Has a central role in coupling the hydrolysis of ATP to the transfer of proteins into and across the cell membrane, serving both as a receptor for the preprotein-SecB complex and as an ATP-driven molecular motor driving the stepwise translocation of polypeptide chains across the membrane. This is Protein translocase subunit SecA 1 from Nitrosospira multiformis (strain ATCC 25196 / NCIMB 11849 / C 71).